A 334-amino-acid chain; its full sequence is Aspartate carbamoyltransferase catalytic subunit (334 aa).

Carbamoyl phosphate contacts are provided by arginine 71 and threonine 72. Residue lysine 99 participates in L-aspartate binding. The carbamoyl phosphate site is built by arginine 121, histidine 151, and glutamine 154. L-aspartate is bound by residues arginine 184 and arginine 239. The carbamoyl phosphate site is built by glycine 280 and proline 281.

This sequence belongs to the aspartate/ornithine carbamoyltransferase superfamily. ATCase family. As to quaternary structure, heterododecamer (2C3:3R2) of six catalytic PyrB chains organized as two trimers (C3), and six regulatory PyrI chains organized as three dimers (R2).

It carries out the reaction carbamoyl phosphate + L-aspartate = N-carbamoyl-L-aspartate + phosphate + H(+). It participates in pyrimidine metabolism; UMP biosynthesis via de novo pathway; (S)-dihydroorotate from bicarbonate: step 2/3. Functionally, catalyzes the condensation of carbamoyl phosphate and aspartate to form carbamoyl aspartate and inorganic phosphate, the committed step in the de novo pyrimidine nucleotide biosynthesis pathway. This chain is Aspartate carbamoyltransferase catalytic subunit, found in Pseudomonas fluorescens (strain SBW25).